The sequence spans 172 residues: Large ribosomal subunit protein uL10 (172 aa).

It belongs to the universal ribosomal protein uL10 family. As to quaternary structure, part of the ribosomal stalk of the 50S ribosomal subunit. The N-terminus interacts with L11 and the large rRNA to form the base of the stalk. The C-terminus forms an elongated spine to which L12 dimers bind in a sequential fashion forming a multimeric L10(L12)X complex.

In terms of biological role, forms part of the ribosomal stalk, playing a central role in the interaction of the ribosome with GTP-bound translation factors. This chain is Large ribosomal subunit protein uL10, found in Rhodospirillum centenum (strain ATCC 51521 / SW).